Reading from the N-terminus, the 224-residue chain is Ribonuclease T (224 aa).

Residues 1–11 are compositionally biased toward acidic residues; it reads MSEDLYEDDQD. The interval 1-20 is disordered; that stretch reads MSEDLYEDDQDSQVSSGSRH. Positions 32–206 constitute an Exonuclease domain; it reads VVVDVETGGF…YDTEKTAELF (175 aa). Aspartate 35, glutamate 37, histidine 193, and aspartate 198 together coordinate Mg(2+). Histidine 193 (proton donor/acceptor) is an active-site residue.

Belongs to the RNase T family. As to quaternary structure, homodimer. Requires Mg(2+) as cofactor.

Its function is as follows. Trims short 3' overhangs of a variety of RNA species, leaving a one or two nucleotide 3' overhang. Responsible for the end-turnover of tRNA: specifically removes the terminal AMP residue from uncharged tRNA (tRNA-C-C-A). Also appears to be involved in tRNA biosynthesis. In Pseudomonas entomophila (strain L48), this protein is Ribonuclease T.